The sequence spans 523 residues: uncharacterized protein (523 aa).

Residues 1 to 63 (MACVSTCLIL…NRHGIAVVKA (63 aa)) constitute a chloroplast transit peptide. The next 3 membrane-spanning stretches (helical) occupy residues 180–200 (VSFG…IIAL), 386–406 (ALVI…NTLL), and 423–443 (IYPL…IRWF).

It localises to the plastid. It is found in the chloroplast membrane. This is an uncharacterized protein from Arabidopsis thaliana (Mouse-ear cress).